A 340-amino-acid chain; its full sequence is Arginine N-succinyltransferase subunit beta (340 aa).

This sequence belongs to the succinylarginine dihydrolase family. In terms of assembly, heterotetramer of two alpha and two beta subunits.

It catalyses the reaction succinyl-CoA + L-arginine = N(2)-succinyl-L-arginine + CoA + H(+). It functions in the pathway amino-acid degradation; L-arginine degradation via AST pathway; L-glutamate and succinate from L-arginine: step 1/5. This chain is Arginine N-succinyltransferase subunit beta (aruG), found in Pseudomonas aeruginosa (strain ATCC 15692 / DSM 22644 / CIP 104116 / JCM 14847 / LMG 12228 / 1C / PRS 101 / PAO1).